A 427-amino-acid polypeptide reads, in one-letter code: Mitogen-activated protein kinase 8B (427 aa).

Positions 26–321 constitute a Protein kinase domain; the sequence is YQNLRPIGSG…VDEALQHPYI (296 aa). ATP contacts are provided by residues 33 to 40 and K55; that span reads GSGAQGIV. D151 (proton acceptor) is an active-site residue. At T183 the chain carries Phosphothreonine. The TXY motif lies at 183–185; sequence TPY. At Y185 the chain carries Phosphotyrosine. The segment at 372–427 is disordered; the sequence is IRGQPSPIGAAVINGSPQPSSSSSINDVSSMSTEPTVASDTDSSLEASAGPLSCCR. The segment covering 387 to 403 has biased composition (low complexity); sequence SPQPSSSSSINDVSSMS. Over residues 404 to 417 the composition is skewed to polar residues; sequence TEPTVASDTDSSLE.

Belongs to the protein kinase superfamily. CMGC Ser/Thr protein kinase family. MAP kinase subfamily. It depends on Mg(2+) as a cofactor. In terms of processing, dually phosphorylated on Thr-183 and Tyr-185, which activates the enzyme. Expressed at high levels in the ovary and at lower levels in brain, gill, heart, spleen, liver, kidney, muscle, bladder and gut.

It catalyses the reaction L-seryl-[protein] + ATP = O-phospho-L-seryl-[protein] + ADP + H(+). It carries out the reaction L-threonyl-[protein] + ATP = O-phospho-L-threonyl-[protein] + ADP + H(+). Activated by threonine and tyrosine phosphorylation. Its function is as follows. Responds to activation by environmental stress and pro-inflammatory cytokines by phosphorylating a number of transcription factors, primarily components of AP-1 such as c-Jun and ATF2 and thus regulates AP-1 transcriptional activity. May play a role in the regulation of the circadian clock. In Cyprinus carpio (Common carp), this protein is Mitogen-activated protein kinase 8B (mapk8b).